Here is a 447-residue protein sequence, read N- to C-terminus: uncharacterized protein (447 aa).

[4Fe-4S] cluster-binding residues include cysteine 87, cysteine 93, cysteine 96, and cysteine 162. Glutamine 284, tyrosine 313, glutamate 334, and aspartate 375 together coordinate S-adenosyl-L-methionine. The Nucleophile role is filled by cysteine 402.

The protein belongs to the class I-like SAM-binding methyltransferase superfamily. RNA M5U methyltransferase family.

This is an uncharacterized protein from Nanoarchaeum equitans (strain Kin4-M).